The following is a 412-amino-acid chain: Elongation factor 1-gamma 2 (412 aa).

N-acetylserine is present on Ser2. A GST N-terminal domain is found at 2-77 (SQGTLYINRS…YLANQVADEK (76 aa)). Residues 86–217 (DVIEKSQILR…AEKALTYTPP (132 aa)) form the GST C-terminal domain. The disordered stretch occupies residues 216–253 (PPKKQKAEKPKAEKSKAEKKKDEAKPADDAAPAKKPKH). The segment covering 220–247 (QKAEKPKAEKSKAEKKKDEAKPADDAAP) has biased composition (basic and acidic residues). The 162-residue stretch at 251–412 (PKHPLEALGK…KEIVDGKVLK (162 aa)) folds into the EF-1-gamma C-terminal domain.

In terms of assembly, the eukaryotic elongation factor 1 complex (eEF1) is probably a heterohexamer. Two trimeric complexes, each composed of eEF1A (TEF1 or TEF2), eEF1Balpha (EFB1) and eEF1Bgamma (CAM1 or TEF4), are probably dimerized via the eF1Bgamma subunits. The eEF1B subcomplex with the GEF activity is formed of eEF1Balpha and eEF1Bgamma. TEF4 interacts with EFB1.

The protein resides in the cytoplasm. It functions in the pathway protein biosynthesis; polypeptide chain elongation. Its function is as follows. Subunit of the eukaryotic elongation factor 1 complex (eEF1). Probably plays a role in anchoring the complex to other cellular components. The protein is Elongation factor 1-gamma 2 (TEF4) of Saccharomyces cerevisiae (strain ATCC 204508 / S288c) (Baker's yeast).